We begin with the raw amino-acid sequence, 356 residues long: Chorismate synthase (356 aa).

NADP(+) contacts are provided by R44 and R49. Residues 121–123, G278, 293–297, and R320 each bind FMN; these read HFS and KPTPS.

It belongs to the chorismate synthase family. FMNH2 is required as a cofactor.

It catalyses the reaction 5-O-(1-carboxyvinyl)-3-phosphoshikimate = chorismate + phosphate. It functions in the pathway metabolic intermediate biosynthesis; chorismate biosynthesis; chorismate from D-erythrose 4-phosphate and phosphoenolpyruvate: step 7/7. Its function is as follows. Catalyzes the anti-1,4-elimination of the C-3 phosphate and the C-6 proR hydrogen from 5-enolpyruvylshikimate-3-phosphate (EPSP) to yield chorismate, which is the branch point compound that serves as the starting substrate for the three terminal pathways of aromatic amino acid biosynthesis. This reaction introduces a second double bond into the aromatic ring system. This is Chorismate synthase from Thermococcus gammatolerans (strain DSM 15229 / JCM 11827 / EJ3).